Reading from the N-terminus, the 298-residue chain is tRNA-cytidine(32) 2-sulfurtransferase (298 aa).

A disordered region spans residues 1 to 26 (MTAVISLPDPPQRASRGPRVAGPGQD). Residues 57–62 (SGGKDS) carry the PP-loop motif motif. Positions 132, 135, and 223 each coordinate [4Fe-4S] cluster.

This sequence belongs to the TtcA family. As to quaternary structure, homodimer. It depends on Mg(2+) as a cofactor. [4Fe-4S] cluster is required as a cofactor.

The protein resides in the cytoplasm. The enzyme catalyses cytidine(32) in tRNA + S-sulfanyl-L-cysteinyl-[cysteine desulfurase] + AH2 + ATP = 2-thiocytidine(32) in tRNA + L-cysteinyl-[cysteine desulfurase] + A + AMP + diphosphate + H(+). The protein operates within tRNA modification. In terms of biological role, catalyzes the ATP-dependent 2-thiolation of cytidine in position 32 of tRNA, to form 2-thiocytidine (s(2)C32). The sulfur atoms are provided by the cysteine/cysteine desulfurase (IscS) system. The protein is tRNA-cytidine(32) 2-sulfurtransferase of Stenotrophomonas maltophilia (strain R551-3).